Consider the following 494-residue polypeptide: Flagellin A (494 aa).

It belongs to the bacterial flagellin family. As to quaternary structure, heteromer of FlaA and FlaB. FlaB is located proximal to the hook while the remainder of the filament is composed of the predominant FlaA.

The protein resides in the secreted. The protein localises to the bacterial flagellum. Functionally, flagellin is the subunit protein which polymerizes to form the filaments of bacterial flagella. Important for motility and virulence. The chain is Flagellin A (flaA) from Helicobacter mustelae.